Reading from the N-terminus, the 608-residue chain is Bifunctional dihydrofolate reductase-thymidylate synthase (608 aa).

Residues 10-228 (DIYAICACCK…TTLDFIIYKK (219 aa)) enclose the DHFR domain. 14 to 15 (IC) serves as a coordination point for substrate. Position 16 (A16) interacts with NADP(+). A substrate-binding site is contributed by V31. 39–45 (GLGNKGV) serves as a coordination point for NADP(+). The substrate site is built by D54 and N108. Residues 106–108 (RTN), 128–130 (SRT), and N144 contribute to the NADP(+) site. The substrate site is built by I164, Y170, and T185. 165-172 (GGSVVYQE) is an NADP(+) binding site. The tract at residues 322-608 (YHPEYQYLNI…HEKISMDMAA (287 aa)) is thymidylate synthase. DUMP is bound at residue R345. Residue C490 is part of the active site. DUMP-binding positions include H491, 509 to 513 (QRSCD), N521, and 551 to 553 (HVY).

It in the N-terminal section; belongs to the dihydrofolate reductase family. In the C-terminal section; belongs to the thymidylate synthase family. As to quaternary structure, homodimer.

The enzyme catalyses (6S)-5,6,7,8-tetrahydrofolate + NADP(+) = 7,8-dihydrofolate + NADPH + H(+). The catalysed reaction is dUMP + (6R)-5,10-methylene-5,6,7,8-tetrahydrofolate = 7,8-dihydrofolate + dTMP. It participates in cofactor biosynthesis; tetrahydrofolate biosynthesis; 5,6,7,8-tetrahydrofolate from 7,8-dihydrofolate: step 1/1. Bifunctional enzyme. Involved in de novo dTMP biosynthesis. Key enzyme in folate metabolism. Catalyzes an essential reaction for de novo glycine and purine synthesis, DNA precursor synthesis, and for the conversion of dUMP to dTMP. The chain is Bifunctional dihydrofolate reductase-thymidylate synthase from Plasmodium falciparum (isolate K1 / Thailand).